The sequence spans 365 residues: Centrosomal protein of 41 kDa B (365 aa).

Residues 1-14 show a composition bias toward basic and acidic residues; sequence MSAKRSIGDPEILK. 2 disordered regions span residues 1 to 23 and 104 to 123; these read MSAK…NQKY and EFLT…SKSP. In terms of domain architecture, Rhodanese spans 177-274; it reads EDCPFLLLDV…ISQKFPQGLT (98 aa). The segment at 329-365 is disordered; the sequence is TSTPSRLRLDSRNSKVPSSASSARSLSSTSSHSKPWK. Positions 342-365 are enriched in low complexity; sequence SKVPSSASSARSLSSTSSHSKPWK.

Belongs to the CEP41 family.

It is found in the cytoplasm. It localises to the cytoskeleton. Its subcellular location is the microtubule organizing center. The protein localises to the centrosome. The protein resides in the cell projection. It is found in the cilium. It localises to the cilium basal body. Its function is as follows. Required during ciliogenesis for tubulin glutamylation in cilium. Probably acts by participating in the transport of tubulin polyglutamylases between the basal body and the cilium. This Xenopus laevis (African clawed frog) protein is Centrosomal protein of 41 kDa B (cep41-b).